The following is a 421-amino-acid chain: Nucleoprotein (421 aa).

Composition is skewed to polar residues over residues 1-11 (MSDNGPQNQRS) and 21-30 (TDSTDNNQDG). Positions 1 to 49 (MSDNGPQNQRSAPRITFGGPTDSTDNNQDGGRSGARPKQRRPQGLPNNT) are disordered. Residues 41 to 186 (RPQGLPNNTA…RGGSQASSRS (146 aa)) form an RNA-binding region. Residues 48-175 (NTASWFTALT…TLPKGFYAEG (128 aa)) form the CoV N NTD domain. Arg92, Arg107, and Arg149 together coordinate RNA. 3 disordered regions span residues 168–213 (PKGF…MASG), 233–268 (KVSG…TKQY), and 363–421 (FPPT…STQA). Residue Ser176 is modified to Phosphoserine; by host. Low complexity predominate over residues 179–206 (GSQASSRSSSRSRGNSRNSTPGSSRGNS). Over residues 233-248 (KVSGRSQQQQGQTVTK) the composition is skewed to polar residues. The 118-residue stretch at 247–364 (TKKSAAEASK…KHIDAYKIFP (118 aa)) folds into the CoV N CTD domain. Residues 258-361 (PRQKRTATKQ…LLNKHIDAYK (104 aa)) are dimerization. The span at 367-378 (EPKKDKKKKTDE) shows a compositional bias: basic and acidic residues. Residues 405 to 421 (RQLQNSMSGASADSTQA) show a composition bias toward polar residues.

It belongs to the betacoronavirus nucleocapsid protein family. As to quaternary structure, homooligomer. Both monomeric and oligomeric forms interact with RNA. Interacts with protein M. Interacts with NSP3; this interaction serves to tether the genome to the newly translated replicase-transcriptase complex at a very early stage of infection. Post-translationally, ADP-ribosylated. The ADP-ribosylation is retained in the virion during infection. In terms of processing, phosphorylated on serine and threonine residues.

It is found in the virion. It localises to the host endoplasmic reticulum-Golgi intermediate compartment. Its subcellular location is the host Golgi apparatus. Packages the positive strand viral genome RNA into a helical ribonucleocapsid (RNP) and plays a fundamental role during virion assembly through its interactions with the viral genome and membrane protein M. Plays an important role in enhancing the efficiency of subgenomic viral RNA transcription as well as viral replication. This Bat coronavirus Rp3/2004 (BtCoV/Rp3/2004) protein is Nucleoprotein.